The following is a 102-amino-acid chain: UPF0213 protein in potE 3'region (102 aa).

Positions 6–81 (SPWHLYMLRL…KQLSKTQKER (76 aa)) constitute a GIY-YIG domain.

It belongs to the UPF0213 family.

The polypeptide is UPF0213 protein in potE 3'region (Serratia liquefaciens).